The sequence spans 501 residues: MNALHTLTTLQEAVDWLRQRVTGTLQTDSRLIQPGDGFIAWPGAATDGRAHVGDAVARGAAACLVECEGVEPFALAGDHIAALRGLKAATGMIASEWFGHPTQRLQVLAVTGTNGKTSTAWWLADALNQLSKEELPALAGCALVGTLGMGVPPALQTTGMTTPDPVRLQRAFAQFAEAGHRACAIEASSIGLAEHRLDGTRIHVALFTNFTQDHLDYHPGMAAYWQAKRALFDWPGLRAAVVNVDDPQGAALHAELQGSDLDLWSISLQGPARLQAKHIVHTGAGLALTVAEGAHTEVLQTQVIGLYNVSNLLGVIAGMRALGVPLAQALQACARLRPVPGRMEQLAAAGQPLVAVDYAHTPDALHQALAALKPVAAQRGGRLWCVFGCGGNRDAGKRPLMGAVAQREADEVIVTSDNPRGEEPQSIIHQILLGTIAGTSVRAEVDRAAAIAQALAEAGANDVVLIAGKGHEDYQEAAGQRVPFSDMAHARAALARRGGVA.

S29 is a UDP-N-acetyl-alpha-D-muramoyl-L-alanyl-D-glutamate binding site. An ATP-binding site is contributed by G112 to S118. UDP-N-acetyl-alpha-D-muramoyl-L-alanyl-D-glutamate-binding positions include T161–T162, S188, and R196. Position 228 is an N6-carboxylysine (K228). Residues R393, D417–R420, G468, and E472 contribute to the meso-2,6-diaminopimelate site. The Meso-diaminopimelate recognition motif motif lies at D417–R420.

The protein belongs to the MurCDEF family. MurE subfamily. It depends on Mg(2+) as a cofactor. In terms of processing, carboxylation is probably crucial for Mg(2+) binding and, consequently, for the gamma-phosphate positioning of ATP.

It localises to the cytoplasm. The enzyme catalyses UDP-N-acetyl-alpha-D-muramoyl-L-alanyl-D-glutamate + meso-2,6-diaminopimelate + ATP = UDP-N-acetyl-alpha-D-muramoyl-L-alanyl-gamma-D-glutamyl-meso-2,6-diaminopimelate + ADP + phosphate + H(+). Its pathway is cell wall biogenesis; peptidoglycan biosynthesis. Its function is as follows. Catalyzes the addition of meso-diaminopimelic acid to the nucleotide precursor UDP-N-acetylmuramoyl-L-alanyl-D-glutamate (UMAG) in the biosynthesis of bacterial cell-wall peptidoglycan. The chain is UDP-N-acetylmuramoyl-L-alanyl-D-glutamate--2,6-diaminopimelate ligase from Acidovorax sp. (strain JS42).